A 144-amino-acid polypeptide reads, in one-letter code: Small ribosomal subunit protein eS12 (144 aa).

This sequence belongs to the eukaryotic ribosomal protein eS12 family.

The sequence is that of Small ribosomal subunit protein eS12 (RPS12) from Trypanosoma brucei brucei.